Reading from the N-terminus, the 207-residue chain is Small ribosomal subunit protein uS4 (207 aa).

The tract at residues lysine 31–asparagine 54 is disordered. A compositionally biased stretch (polar residues) spans glycine 42 to glycine 53. One can recognise an S4 RNA-binding domain in the interval serine 97–glutamate 158.

This sequence belongs to the universal ribosomal protein uS4 family. As to quaternary structure, part of the 30S ribosomal subunit. Contacts protein S5. The interaction surface between S4 and S5 is involved in control of translational fidelity.

One of the primary rRNA binding proteins, it binds directly to 16S rRNA where it nucleates assembly of the body of the 30S subunit. Its function is as follows. With S5 and S12 plays an important role in translational accuracy. This Polynucleobacter asymbioticus (strain DSM 18221 / CIP 109841 / QLW-P1DMWA-1) (Polynucleobacter necessarius subsp. asymbioticus) protein is Small ribosomal subunit protein uS4.